We begin with the raw amino-acid sequence, 89 residues long: Small ribosomal subunit protein bS20 (89 aa).

This sequence belongs to the bacterial ribosomal protein bS20 family.

Binds directly to 16S ribosomal RNA. This is Small ribosomal subunit protein bS20 from Stenotrophomonas maltophilia (strain K279a).